The sequence spans 287 residues: Lys-63-specific deubiquitinase (287 aa).

Residues 33–176 (VHLESDAFLV…YTCFQSVQAQ (144 aa)) enclose the MPN domain. 3 residues coordinate Zn(2+): H119, H121, and D132. The JAMM motif signature appears at 119 to 132 (HSHPHITVWPSHVD). Positions 256 to 283 (LQWLEDRLEQNKQSIITLQKEKELLTQE) form a coiled coil.

The protein belongs to the peptidase M67A family. BRCC36 subfamily. As to quaternary structure, monomer. Homodimer. Component of the BRISC complex, at least composed of abraxas2, brcc3, babam1 and babam2. Interacts with abraxas2; the interaction is direct and may form a heterotetramer. Component of the BRCA1-A complex. Both the BRCA1-A complex and the BRISC complex bind polyubiquitin. The cofactor is Zn(2+).

The protein resides in the nucleus. Its subcellular location is the cytoplasm. It localises to the cytoskeleton. The protein localises to the spindle pole. Functionally, metalloprotease that specifically cleaves 'Lys-63'-linked polyubiquitin chains, leaving the last ubiquitin chain attached to its substrates. Catalytic subunit of the BRISC complex, a multiprotein complex that specifically cleaves 'Lys-63'-linked ubiquitin in various substrates; brcc3 does not have activity by itself, but needs to be associated into a higher-order assembly, for minimal in vitro activity. In Danio rerio (Zebrafish), this protein is Lys-63-specific deubiquitinase.